A 203-amino-acid chain; its full sequence is Tic20 family protein Ycf60 (203 aa).

5 consecutive transmembrane segments (helical) span residues 2–22, 51–71, 84–104, 131–151, and 153–173; these read IRLFTFGIITMLVLVIARLAI, IIPYYLPLFEGLQNFGQYVLP, ILLPMLIFYMNHAILGLVTFF, ILLFLVGSLFGAIFRAFPIEF, and ISFIGLTVCNMMFWFILSTIT.

This sequence belongs to the Tic20 family.

The protein resides in the plastid. It localises to the chloroplast membrane. The sequence is that of Tic20 family protein Ycf60 (ycf60) from Porphyra purpurea (Red seaweed).